The primary structure comprises 132 residues: Small ribosomal subunit protein uS8 (132 aa).

Belongs to the universal ribosomal protein uS8 family. As to quaternary structure, part of the 30S ribosomal subunit. Contacts proteins S5 and S12.

Functionally, one of the primary rRNA binding proteins, it binds directly to 16S rRNA central domain where it helps coordinate assembly of the platform of the 30S subunit. This Renibacterium salmoninarum (strain ATCC 33209 / DSM 20767 / JCM 11484 / NBRC 15589 / NCIMB 2235) protein is Small ribosomal subunit protein uS8.